The following is a 601-amino-acid chain: Tripeptidyl-peptidase SED4 (601 aa).

A signal peptide spans 1–22; that stretch reads MVSFTLRAIGACLVSLPALVTA. The propeptide at 23–202 is removed in mature form; that stretch reads APTSHISGDF…SVFTSDLEIT (180 aa). 2 N-linked (GlcNAc...) asparagine glycosylation sites follow: Asn-210 and Asn-281. Positions 212–601 constitute a Peptidase S53 domain; that stretch reads TITPDCIRDL…ETLSKLVLQY (390 aa). Catalysis depends on charge relay system residues Glu-288 and Asp-292. The N-linked (GlcNAc...) asparagine glycan is linked to Asn-323. Ser-504 acts as the Charge relay system in catalysis. Residues Asp-546 and Ile-547 each contribute to the Ca(2+) site. N-linked (GlcNAc...) asparagine glycosylation is present at Asn-575. Positions 579 and 581 each coordinate Ca(2+).

Ca(2+) is required as a cofactor.

Its subcellular location is the secreted. The protein resides in the extracellular space. The enzyme catalyses Release of an N-terminal tripeptide from a polypeptide.. Secreted tripeptidyl-peptidase which degrades proteins at acidic pHs and is involved in virulence. This is Tripeptidyl-peptidase SED4 (SED4) from Arthroderma otae (strain ATCC MYA-4605 / CBS 113480) (Microsporum canis).